We begin with the raw amino-acid sequence, 448 residues long: Ribosome biogenesis protein YTM1 (448 aa).

Positions 5 to 86 (TSNQAVVFST…EETLEIEYIE (82 aa)) are ubiquitin-like (UBL) domain. WD repeat units lie at residues 98 to 136 (PHES…TLDA), 191 to 230 (LHTA…KHEV), 271 to 309 (SHIG…CTRT), 312 to 351 (ASEK…ALSA), 357 to 397 (LHPA…AAIS), and 403 to 439 (DGTK…ETQG). The interval 225–261 (PPKHEVPEPTITAADQRTKKRRKVDPSSGDSSSPTAI) is disordered.

Belongs to the WD repeat WDR12/YTM1 family. As to quaternary structure, component of the NOP7 complex, composed of ERB1, NOP7 and YTM1. The complex is held together by ERB1, which interacts with NOP7 via its N-terminal domain and with YTM1 via a high-affinity interaction between the seven-bladed beta-propeller domains of the 2 proteins. The NOP7 complex associates with the 66S pre-ribosome. Interacts (via UBL domain) with MDN1 (via VWFA/MIDAS domain).

It is found in the nucleus. Its subcellular location is the nucleolus. The protein resides in the nucleoplasm. In terms of biological role, component of the NOP7 complex, which is required for maturation of the 25S and 5.8S ribosomal RNAs and formation of the 60S ribosome. The sequence is that of Ribosome biogenesis protein YTM1 from Coprinopsis cinerea (strain Okayama-7 / 130 / ATCC MYA-4618 / FGSC 9003) (Inky cap fungus).